The primary structure comprises 150 residues: Putative HTH-type transcriptional regulator HI_0379 (150 aa).

In terms of domain architecture, HTH rrf2-type spans 2–131 (KLTSKGRYAV…NEITLAELVN (130 aa)).

The chain is Putative HTH-type transcriptional regulator HI_0379 from Haemophilus influenzae (strain ATCC 51907 / DSM 11121 / KW20 / Rd).